The primary structure comprises 556 residues: Urocanate hydratase (556 aa).

NAD(+) is bound by residues 52–53 (GG), Q130, 176–178 (GMG), E196, R201, 243–244 (NA), 264–268 (QTSAH), 274–275 (YL), and Y323. Residue C411 is part of the active site. G493 serves as a coordination point for NAD(+).

The protein belongs to the urocanase family. NAD(+) serves as cofactor.

The protein localises to the cytoplasm. It catalyses the reaction 4-imidazolone-5-propanoate = trans-urocanate + H2O. It participates in amino-acid degradation; L-histidine degradation into L-glutamate; N-formimidoyl-L-glutamate from L-histidine: step 2/3. Catalyzes the conversion of urocanate to 4-imidazolone-5-propionate. In Rhodospirillum rubrum (strain ATCC 11170 / ATH 1.1.1 / DSM 467 / LMG 4362 / NCIMB 8255 / S1), this protein is Urocanate hydratase.